Reading from the N-terminus, the 295-residue chain is 33 kDa chaperonin (295 aa).

Disulfide bonds link Cys-236–Cys-238 and Cys-269–Cys-272.

This sequence belongs to the HSP33 family. Under oxidizing conditions two disulfide bonds are formed involving the reactive cysteines. Under reducing conditions zinc is bound to the reactive cysteines and the protein is inactive.

Its subcellular location is the cytoplasm. Functionally, redox regulated molecular chaperone. Protects both thermally unfolding and oxidatively damaged proteins from irreversible aggregation. Plays an important role in the bacterial defense system toward oxidative stress. The sequence is that of 33 kDa chaperonin from Citrifermentans bemidjiense (strain ATCC BAA-1014 / DSM 16622 / JCM 12645 / Bem) (Geobacter bemidjiensis).